The sequence spans 534 residues: Cytochalasin cluster regulator ccsR (534 aa).

The segment at residues 13–54 is a DNA-binding region (zn(2)-C6 fungal-type); that stretch reads CDRCRRQKLRCVRPLKHGACEHPNNIEALEPCERCSRAGTPC. Disordered regions lie at residues 88–170 and 350–378; these read IPKQ…LDAP and TSAR…SAAS. Residues 109–125 show a composition bias toward polar residues; it reads TGQNKGINDANAVTGSL. Residues 130–146 are compositionally biased toward basic and acidic residues; it reads PDHRSGSNVHRQPEARP. Low complexity predominate over residues 361 to 378; sequence DMCASSSNRDSSDLSAAS.

The protein resides in the nucleus. Functionally, transcription factor involved in regulation of gene cluster that mediates the biosynthesis of the mycotoxins cytochalasins E and K. The sequence is that of Cytochalasin cluster regulator ccsR from Aspergillus clavatus (strain ATCC 1007 / CBS 513.65 / DSM 816 / NCTC 3887 / NRRL 1 / QM 1276 / 107).